A 321-amino-acid polypeptide reads, in one-letter code: Lipoyl synthase (321 aa).

Positions 68, 73, 79, 94, 98, 101, and 308 each coordinate [4Fe-4S] cluster. Positions 80–297 constitute a Radical SAM core domain; the sequence is FNHGTATFMI…KEIALELGFT (218 aa).

This sequence belongs to the radical SAM superfamily. Lipoyl synthase family. Requires [4Fe-4S] cluster as cofactor.

The protein resides in the cytoplasm. It catalyses the reaction [[Fe-S] cluster scaffold protein carrying a second [4Fe-4S](2+) cluster] + N(6)-octanoyl-L-lysyl-[protein] + 2 oxidized [2Fe-2S]-[ferredoxin] + 2 S-adenosyl-L-methionine + 4 H(+) = [[Fe-S] cluster scaffold protein] + N(6)-[(R)-dihydrolipoyl]-L-lysyl-[protein] + 4 Fe(3+) + 2 hydrogen sulfide + 2 5'-deoxyadenosine + 2 L-methionine + 2 reduced [2Fe-2S]-[ferredoxin]. The protein operates within protein modification; protein lipoylation via endogenous pathway; protein N(6)-(lipoyl)lysine from octanoyl-[acyl-carrier-protein]: step 2/2. Its function is as follows. Catalyzes the radical-mediated insertion of two sulfur atoms into the C-6 and C-8 positions of the octanoyl moiety bound to the lipoyl domains of lipoate-dependent enzymes, thereby converting the octanoylated domains into lipoylated derivatives. In Aliivibrio fischeri (strain MJ11) (Vibrio fischeri), this protein is Lipoyl synthase.